Consider the following 568-residue polypeptide: Potassium-transporting ATPase potassium-binding subunit (568 aa).

Helical transmembrane passes span 1–21, 60–80, 129–149, 174–194, 251–271, 278–298, 381–401, 420–440, 488–508, and 528–548; these read MWLT…LAVP, GLAL…LLRA, AITF…AGFI, VMLP…VPQA, IHIL…GSML, WVLF…VFTA, VGLI…GMMI, VMLA…LAAV, IGLA…ALAG, and PLFM…TFLP.

The protein belongs to the KdpA family. As to quaternary structure, the system is composed of three essential subunits: KdpA, KdpB and KdpC.

The protein localises to the cell inner membrane. Its function is as follows. Part of the high-affinity ATP-driven potassium transport (or Kdp) system, which catalyzes the hydrolysis of ATP coupled with the electrogenic transport of potassium into the cytoplasm. This subunit binds the periplasmic potassium ions and delivers the ions to the membrane domain of KdpB through an intramembrane tunnel. This Delftia acidovorans (strain DSM 14801 / SPH-1) protein is Potassium-transporting ATPase potassium-binding subunit.